The sequence spans 730 residues: Probable G-protein coupled receptor 149 (730 aa).

The Extracellular portion of the chain corresponds to 1–34; sequence MSFFLSNLTNDSRLWKVSHNSTDLMNSPETLTLS. N-linked (GlcNAc...) asparagine glycans are attached at residues asparagine 7, asparagine 10, and asparagine 20. A helical transmembrane segment spans residues 35-55; sequence LFCLICLMTLVALVGSIFSLV. Over 56–68 the chain is Cytoplasmic; it reads SLLTMQYRTVVSM. The helical transmembrane segment at 69–89 threads the bilayer; that stretch reads LVTSWSVDDLLSVLSVAIFMV. Residues 90–108 lie on the Extracellular side of the membrane; the sequence is LQWPREAPGYFQSLCTTSA. Cysteines 104 and 181 form a disulfide. Residues 109-131 traverse the membrane as a helical segment; sequence LLYMCQGLSSNLKATLIVFYNFY. Topologically, residues 132-148 are cytoplasmic; the sequence is TMHRTVVSQSSSWRSGQ. A helical transmembrane segment spans residues 149–169; that stretch reads VLGVALTVWAVSLLLASLPLC. Residues 170–188 lie on the Extracellular side of the membrane; sequence GWGVFVRTPWGCLTDCSSP. Residues 189–209 traverse the membrane as a helical segment; that stretch reads YVLLLFAVYASAFGLLAVLSV. Residues 210–308 are Cytoplasmic-facing; the sequence is PLTHQLLCSE…SFPVSLAQKR (99 aa). The helical transmembrane segment at 309–329 threads the bilayer; sequence FALILALTKVILWLPMMIHMV. Residues 330–340 are Extracellular-facing; it reads VKHVVGFQSLP. A helical membrane pass occupies residues 341–361; it reads VDMLSFLLTLLASTVTPVFVL. Residues 362–730 are Cytoplasmic-facing; the sequence is SKRWAHLPCG…RKREAESKGN (369 aa).

The protein belongs to the G-protein coupled receptor 1 family. Expressed exclusively in brain and testis.

It is found in the cell membrane. Its function is as follows. Orphan receptor. The sequence is that of Probable G-protein coupled receptor 149 (Gpr149) from Rattus norvegicus (Rat).